We begin with the raw amino-acid sequence, 1364 residues long: Poly(A) RNA polymerase gld-2 homolog A (1364 aa).

Over residues 27–51 (NSTNTTASPATTNTINTTTKTITTS) the composition is skewed to low complexity. Disordered regions lie at residues 27-97 (NSTN…VVHT), 159-203 (SRPS…EAIT), 315-338 (AVGT…VSST), 417-535 (APAT…STST), and 666-732 (LGLD…LSDA). Residues 66–91 (LEIEDSGRNEPEDLEHGAAKPLEQRK) show a composition bias toward basic and acidic residues. The span at 175 to 198 (GTTVAASTTPSTTVTTSSGSPGSG) shows a compositional bias: low complexity. Residues 417-426 (APATGAASSS) are compositionally biased toward low complexity. Residues 427–444 (DQNVATKRNHQGAATQNN) are compositionally biased toward polar residues. Residues 445–455 (HRNRHNAKKGG) are compositionally biased toward basic residues. A compositionally biased stretch (low complexity) spans 461–493 (KELTSNSSESLSNSSSKSQLNKRPSSSSSISPI). Residues 494–504 (KHPHRNYRNRM) show a composition bias toward basic residues. Residues 509–535 (TEPTEQKAATTTVPISNYQPPQQSTST) are compositionally biased toward polar residues. Positions 993 and 995 each coordinate Mg(2+). In terms of domain architecture, PAP-associated spans 1163-1224 (TLGDLLLSFL…CIEEPFDQTN (62 aa)).

It belongs to the DNA polymerase type-B-like family. GLD2 subfamily. Interacts with Fmr1 and eIF-4E. Mg(2+) serves as cofactor. The cofactor is Mn(2+). As to expression, expressed in the brain.

The protein localises to the cytoplasm. Its subcellular location is the nucleus. The catalysed reaction is RNA(n) + ATP = RNA(n)-3'-adenine ribonucleotide + diphosphate. Its function is as follows. Cytoplasmic poly(A) RNA polymerase that adds successive AMP monomers to the 3'-end of specific RNAs, forming a poly(A) tail. In contrast to the canonical nuclear poly(A) RNA polymerase, it only adds poly(A) to selected cytoplasmic mRNAs. Required for formation of long term memory. In Drosophila melanogaster (Fruit fly), this protein is Poly(A) RNA polymerase gld-2 homolog A (Gld2).